The following is a 198-amino-acid chain: Protoplast secreted protein 2 (198 aa).

The N-terminal stretch at M1–A21 is a signal peptide. Residues E22–F191 form the Flavodoxin-like domain.

It belongs to the WrbA family.

Its subcellular location is the secreted. This Saccharomyces cerevisiae (strain ATCC 204508 / S288c) (Baker's yeast) protein is Protoplast secreted protein 2 (PST2).